Reading from the N-terminus, the 341-residue chain is Anthranilate phosphoribosyltransferase (341 aa).

Residues Gly79, 82-83, Thr87, 89-92, 107-115, and Ser119 each bind 5-phospho-alpha-D-ribose 1-diphosphate; these read GD, NIST, and KHGNRAVSS. Gly79 provides a ligand contact to anthranilate. Ser91 contributes to the Mg(2+) binding site. Asn110 is a binding site for anthranilate. Arg165 contributes to the anthranilate binding site. Asp224 and Glu225 together coordinate Mg(2+).

The protein belongs to the anthranilate phosphoribosyltransferase family. As to quaternary structure, homodimer. Mg(2+) serves as cofactor.

It carries out the reaction N-(5-phospho-beta-D-ribosyl)anthranilate + diphosphate = 5-phospho-alpha-D-ribose 1-diphosphate + anthranilate. It participates in amino-acid biosynthesis; L-tryptophan biosynthesis; L-tryptophan from chorismate: step 2/5. In terms of biological role, catalyzes the transfer of the phosphoribosyl group of 5-phosphorylribose-1-pyrophosphate (PRPP) to anthranilate to yield N-(5'-phosphoribosyl)-anthranilate (PRA). The sequence is that of Anthranilate phosphoribosyltransferase from Bacillus cereus (strain ZK / E33L).